The following is a 116-amino-acid chain: Protein Rev (116 aa).

Ser-5 and Ser-8 each carry phosphoserine; by host CK2. Positions 18 to 26 (LIKFLYQSN) are homomultimerization. The disordered stretch occupies residues 23-48 (YQSNPPPNPEGTRQARRNRRRRWRER). Residues 34–50 (TRQARRNRRRRWRERQR) carry the Nuclear localization signal and RNA-binding (RRE) motif. The segment covering 36–48 (QARRNRRRRWRER) has biased composition (basic residues). The short motif at 73 to 84 (LQLPPLERLNLD) is the Nuclear export signal and binding to XPO1 element. The disordered stretch occupies residues 90 to 116 (GTSGTQGVGSPEILVESPAVLEPGTKE). Ser-92 and Ser-99 each carry phosphoserine; by host.

Belongs to the HIV-1 REV protein family. As to quaternary structure, homomultimer; when bound to the RRE. Multimeric assembly is essential for activity and may involve XPO1. Binds to human KPNB1, XPO1, TNPO1, RANBP5 and IPO7. Interacts with the viral Integrase. Interacts with human KHDRBS1. Interacts with human NAP1; this interaction decreases Rev multimerization and stimulates its activity. Interacts with human DEAD-box helicases DDX3 and DDX24; these interactions may serve for viral RNA export to the cytoplasm and packaging, respectively. Interacts with human PSIP1; this interaction may inhibit HIV-1 DNA integration by promoting dissociation of the Integrase-LEDGF/p75 complex. In terms of processing, asymmetrically arginine dimethylated at one site by host PRMT6. Methylation impairs the RNA-binding activity and export of viral RNA from the nucleus to the cytoplasm. Phosphorylated by protein kinase CK2. Presence of, and maybe binding to the N-terminus of the regulatory beta subunit of CK2 is necessary for CK2-mediated Rev's phosphorylation.

The protein localises to the host nucleus. It is found in the host nucleolus. The protein resides in the host cytoplasm. Functionally, escorts unspliced or incompletely spliced viral pre-mRNAs (late transcripts) out of the nucleus of infected cells. These pre-mRNAs carry a recognition sequence called Rev responsive element (RRE) located in the env gene, that is not present in fully spliced viral mRNAs (early transcripts). This function is essential since most viral proteins are translated from unspliced or partially spliced pre-mRNAs which cannot exit the nucleus by the pathway used by fully processed cellular mRNAs. Rev itself is translated from a fully spliced mRNA that readily exits the nucleus. Rev's nuclear localization signal (NLS) binds directly to KPNB1/Importin beta-1 without previous binding to KPNA1/Importin alpha-1. KPNB1 binds to the GDP bound form of RAN (Ran-GDP) and targets Rev to the nucleus. In the nucleus, the conversion from Ran-GDP to Ran-GTP dissociates Rev from KPNB1 and allows Rev's binding to the RRE in viral pre-mRNAs. Rev multimerization on the RRE via cooperative assembly exposes its nuclear export signal (NES) to the surface. Rev can then form a complex with XPO1/CRM1 and Ran-GTP, leading to nuclear export of the complex. Conversion from Ran-GTP to Ran-GDP mediates dissociation of the Rev/RRE/XPO1/RAN complex, so that Rev can return to the nucleus for a subsequent round of export. Beside KPNB1, also seems to interact with TNPO1/Transportin-1, RANBP5/IPO5 and IPO7/RANBP7 for nuclear import. The nucleoporin-like HRB/RIP is an essential cofactor that probably indirectly interacts with Rev to release HIV RNAs from the perinuclear region to the cytoplasm. The sequence is that of Protein Rev from Human immunodeficiency virus type 1 group M subtype B (isolate OYI) (HIV-1).